The sequence spans 331 residues: Type 2 lactosamine alpha-2,3-sialyltransferase (331 aa).

The Cytoplasmic segment spans residues 1-4; it reads MKGY. A helical; Signal-anchor for type II membrane protein transmembrane segment spans residues 5–25; the sequence is VVAIFLSSIFLYYVLYCILWG. The Lumenal portion of the chain corresponds to 26–331; that stretch reads TNGYWFPNEE…KKMVINLTQN (306 aa). N-linked (GlcNAc...) asparagine glycosylation is found at N129, N181, N295, N308, and N327.

The protein belongs to the glycosyltransferase 29 family.

It is found in the golgi apparatus membrane. The catalysed reaction is a neolactoside nLc4Cer(d18:1(4E)) + CMP-N-acetyl-beta-neuraminate = a neolactoside IV(3)-alpha-NeuAc-nLc4Cer(d18:1(4E)) + CMP + H(+). It carries out the reaction a beta-D-galactosyl-(1-&gt;4)-N-acetyl-beta-D-glucosaminyl derivative + CMP-N-acetyl-beta-neuraminate = an N-acetyl-alpha-neuraminyl-(2-&gt;3)-beta-D-galactosyl-(1-&gt;4)-N-acetyl-beta-D-glucosaminyl derivative + CMP + H(+). It catalyses the reaction a neolactoside nLc6Cer(d18:1(4E)) + CMP-N-acetyl-beta-neuraminate = a neolactoside VI(3)-alpha-NeuNAc-nLc6Cer(d18:1(4E)) + CMP + H(+). Functionally, transfers the sialyl residue from CMP-N-acetyl-beta-neuraminate to the terminal galactose residue on sugar chains of glycoproteins and glycolipids. It's alpha-2,3-sialyltransferase activity is specific toward type II glycan chains (Galbeta1-4GlcNAc) on glycoproteins and glycolipids such as neolactosides nLc4Cer and nLc6Cer, whose sialyl-products serve as precursors for the Lewis X antigen. Critically involved in the synthesis of functional selectin ligands needed for neutrophil recruitment during inflammation and lymphocyte homing to the lymph nodes. This is Type 2 lactosamine alpha-2,3-sialyltransferase (St3gal6) from Rattus norvegicus (Rat).